The sequence spans 377 residues: Phosphoserine aminotransferase (377 aa).

L-glutamate is bound at residue R43. Residues W105, T164, D189, and Q212 each contribute to the pyridoxal 5'-phosphate site. K213 bears the N6-(pyridoxal phosphate)lysine mark. 254–255 (NT) is a binding site for pyridoxal 5'-phosphate.

This sequence belongs to the class-V pyridoxal-phosphate-dependent aminotransferase family. SerC subfamily. Homodimer. Pyridoxal 5'-phosphate serves as cofactor.

Its subcellular location is the cytoplasm. It carries out the reaction O-phospho-L-serine + 2-oxoglutarate = 3-phosphooxypyruvate + L-glutamate. It catalyses the reaction 4-(phosphooxy)-L-threonine + 2-oxoglutarate = (R)-3-hydroxy-2-oxo-4-phosphooxybutanoate + L-glutamate. It participates in amino-acid biosynthesis; L-serine biosynthesis; L-serine from 3-phospho-D-glycerate: step 2/3. Its pathway is cofactor biosynthesis; pyridoxine 5'-phosphate biosynthesis; pyridoxine 5'-phosphate from D-erythrose 4-phosphate: step 3/5. Its function is as follows. Catalyzes the reversible conversion of 3-phosphohydroxypyruvate to phosphoserine and of 3-hydroxy-2-oxo-4-phosphonooxybutanoate to phosphohydroxythreonine. The chain is Phosphoserine aminotransferase from Bordetella bronchiseptica (strain ATCC BAA-588 / NCTC 13252 / RB50) (Alcaligenes bronchisepticus).